A 279-amino-acid polypeptide reads, in one-letter code: DegV domain-containing protein SACOL1460 (279 aa).

A DegV domain is found at 4–278; it reads QIIVTDSTSD…QGAIGLVVLK (275 aa). Positions 61 and 93 each coordinate hexadecanoate.

Its function is as follows. May bind long-chain fatty acids, such as palmitate, and may play a role in lipid transport or fatty acid metabolism. The polypeptide is DegV domain-containing protein SACOL1460 (Staphylococcus aureus (strain COL)).